The following is a 387-amino-acid chain: D(4) dopamine receptor (387 aa).

Residues 1 to 34 (MGNSSATEDGGLLAGRGPESLGTGAGLGGAGAAA) are Extracellular-facing. The N-linked (GlcNAc...) asparagine glycan is linked to asparagine 3. The helical transmembrane segment at 35–57 (LVGGVLLIGLVLAGNSLVCVSVA) threads the bilayer. Topologically, residues 58–67 (SERTLQTPTN) are cytoplasmic. Residues 68–90 (YFIVSLAAADLLLAVLVLPLFVY) traverse the membrane as a helical segment. Aspartate 77 is a Na(+) binding site. Topologically, residues 91-106 (SEVQGGVWLLSPRLCD) are extracellular. Cysteines 105 and 180 form a disulfide. Residues 107–128 (TLMAMDVMLCTASIFNLCAISV) form a helical membrane-spanning segment. Serine 119 provides a ligand contact to Na(+). Residues 129–146 (DRFVAVTVPLRYNQQGQC) are Cytoplasmic-facing. The helical transmembrane segment at 147–170 (QLLLIAATWLLSAAVASPVVCGLN) threads the bilayer. Residues 171-186 (DVPGRDPAVCCLENRD) are Extracellular-facing. A helical transmembrane segment spans residues 187–208 (YVVYSSVCSFFLPCPLMLLLYW). Over 209–314 (ATFRGLRRWE…ITGRERKAMR (106 aa)) the chain is Cytoplasmic. Disordered stretches follow at residues 224–247 (KLHS…TQGP) and 287–306 (AALP…AKIT). Residues 315-337 (VLPVVVGAFLVCWTPFFVVHITR) form a helical membrane-spanning segment. Residues 338–346 (ALCPACFVS) are Extracellular-facing. An intrachain disulfide couples cysteine 340 to cysteine 343. A helical transmembrane segment spans residues 347 to 369 (PRLVSAVTWLGYVNSALNPIIYT). The Cytoplasmic segment spans residues 370-387 (IFNAEFRSVFRKTLRLRC). Residue cysteine 387 is the site of S-palmitoyl cysteine attachment.

Belongs to the G-protein coupled receptor 1 family. As to quaternary structure, forms homo- and heterooligomers with DRD2. D4.7 allele exhibits higher affinity for homodimers compared to DRD2 heterodimers, while alleles D42. and 4.4 have similar affinities for both. The interaction with DRD2 may modulate agonist-induced downstream signaling. Interacts with CLIC6. Interacts with GPRASP1. May interact with ADORA2A. Interacts with KLHL12. Palmitoylated. Palmitoylation of the C-terminal Cys is important for normal expression at the cell membrane. Detected in olfactory bulb, hypothalamus, olfactory tubercle, brainstem and striatum.

The protein resides in the cell membrane. Its function is as follows. Dopamine receptor responsible for neuronal signaling in the mesolimbic system of the brain, an area of the brain that regulates emotion and complex behavior. Activated by dopamine, but also by epinephrine and norepinephrine, and by numerous synthetic agonists and drugs. Agonist binding triggers signaling via G proteins that inhibit adenylyl cyclase. Modulates the circadian rhythm of contrast sensitivity by regulating the rhythmic expression of NPAS2 in the retinal ganglion cells. The chain is D(4) dopamine receptor (Drd4) from Mus musculus (Mouse).